A 332-amino-acid chain; its full sequence is MLDVRGSLPGQVNTGTISPYRRIDRSNDTIGTSDLAADEQVLLGPFNHLDARPGKEIRSQLIDAFDSWLQVPTASLAVIKNVVRMLHNASLLIDDIQDNSELRRGAPAAHHAFGTAQTINSANYVYFRALRELSTLHNPVMVQIYTAELLNLHHGQGMDLFWRETGTCPTESRYLEMVGNKTGGLFRLAIRCMCVEGSPKQSSADYIRLATMIGILFQILDDFRNLTDGSYTSSKGFCEDLTEGKFSFPIVHAIRSNPGDSFLHDILRQHTDDPAVKKEAVSYLERCGSLIYTQGVIHQLAGDVLTLADEVDAGQGRAQALKDIVQRLMVKL.

3 residues coordinate isopentenyl diphosphate: Lys-55, Arg-58, and His-87. Positions 94 and 98 each coordinate Mg(2+). Arg-103 provides a ligand contact to dimethylallyl diphosphate. Arg-104 serves as a coordination point for isopentenyl diphosphate. Dimethylallyl diphosphate is bound by residues Lys-181, Thr-182, and Gln-218. Asp-221 serves as a coordination point for Mg(2+). Dimethylallyl diphosphate contacts are provided by Asn-225, Lys-235, and Lys-245.

This sequence belongs to the FPP/GGPP synthase family. Mg(2+) is required as a cofactor.

It catalyses the reaction isopentenyl diphosphate + dimethylallyl diphosphate = (2E)-geranyl diphosphate + diphosphate. The enzyme catalyses isopentenyl diphosphate + (2E)-geranyl diphosphate = (2E,6E)-farnesyl diphosphate + diphosphate. The catalysed reaction is isopentenyl diphosphate + (2E,6E)-farnesyl diphosphate = (2E,6E,10E)-geranylgeranyl diphosphate + diphosphate. Geranylgeranyl pyrophosphate synthase; part of the gene cluster 3 that mediates the biosynthesis of an isoprenoid secondary metabolite. The polypeptide is Geranylgeranyl pyrophosphate synthase 2 (GGS2) (Zymoseptoria tritici (strain CBS 115943 / IPO323) (Speckled leaf blotch fungus)).